Reading from the N-terminus, the 159-residue chain is U1 small nuclear ribonucleoprotein C (159 aa).

The Matrin-type zinc finger occupies 4–36 (FYCDYCDTYLTHDSPSVRKTHCSGRKHKENVKD). A disordered region spans residues 61–99 (KIPPTPFPGAPPPGGSLLPHPSIGGPPRPGMLPAPPMGG). Pro residues-rich tracts occupy residues 63-74 (PPTPFPGAPPPG) and 84-99 (GGPPRPGMLPAPPMGG).

This sequence belongs to the U1 small nuclear ribonucleoprotein C family. As to quaternary structure, component of the U1 snRNP. The U1 snRNP is composed of the U1 snRNA and the 7 core Sm proteins snrpb, snrpd1, snrpd2, snrpd3, snrpe, snrpf and snrpg that assemble in a heptameric protein ring on the Sm site of the small nuclear RNA to form the core snRNP, and at least 3 U1 snRNP-specific proteins snrnp70/U1-70K, snrpa/U1-A and snrpc/U1-C. snrpc/U1-C interacts with U1 snRNA and the 5' splice-site region of the pre-mRNA.

The protein localises to the nucleus. In terms of biological role, component of the spliceosomal U1 snRNP, which is essential for recognition of the pre-mRNA 5' splice-site and the subsequent assembly of the spliceosome. snrpc/U1-C is directly involved in initial 5' splice-site recognition for both constitutive and regulated alternative splicing. The interaction with the 5' splice-site seems to precede base-pairing between the pre-mRNA and the U1 snRNA. Stimulates commitment or early (E) complex formation by stabilizing the base pairing of the 5' end of the U1 snRNA and the 5' splice-site region. The sequence is that of U1 small nuclear ribonucleoprotein C from Danio rerio (Zebrafish).